Here is an 89-residue protein sequence, read N- to C-terminus: Acylphosphatase (89 aa).

In terms of domain architecture, Acylphosphatase-like spans 3–89 (ALFIKISGRV…QNFTSFDIVP (87 aa)). Active-site residues include Arg-18 and Asn-36.

This sequence belongs to the acylphosphatase family.

It carries out the reaction an acyl phosphate + H2O = a carboxylate + phosphate + H(+). The polypeptide is Acylphosphatase (acyP) (Pseudothermotoga lettingae (strain ATCC BAA-301 / DSM 14385 / NBRC 107922 / TMO) (Thermotoga lettingae)).